The sequence spans 402 residues: Elongation factor Tu (402 aa).

The 196-residue stretch at 16–211 (KEHINIGTIG…AVDSYIDSPV (196 aa)) folds into the tr-type G domain. The interval 25-32 (GHVDHGKT) is G1. 25 to 32 (GHVDHGKT) serves as a coordination point for GTP. A Mg(2+)-binding site is contributed by T32. Positions 66–70 (GITIN) are G2. The tract at residues 87–90 (DCPG) is G3. GTP contacts are provided by residues 87–91 (DCPGH) and 142–145 (NKID). Residues 142-145 (NKID) form a G4 region. The segment at 181–183 (SAR) is G5.

The protein belongs to the TRAFAC class translation factor GTPase superfamily. Classic translation factor GTPase family. EF-Tu/EF-1A subfamily. As to quaternary structure, monomer.

It localises to the cytoplasm. It carries out the reaction GTP + H2O = GDP + phosphate + H(+). Functionally, GTP hydrolase that promotes the GTP-dependent binding of aminoacyl-tRNA to the A-site of ribosomes during protein biosynthesis. The chain is Elongation factor Tu from Mesomycoplasma hyopneumoniae (strain 232) (Mycoplasma hyopneumoniae).